The chain runs to 349 residues: MAGGRCGPQLTALLAAWIAAVAATAGPEEAALPPEQSRVQPMTASNWTLVMEGEWMLKFYAPWCPSCQQTDSEWEAFAKNGEILQISVGKVDVIQEPGLSGRFFVTTLPAFFHAKDGIFRRYRGPGIFEDLQNYILEKKWQSVEPLTGWKSPASLTMSGMAGLFSISGKIWHLHNYFTVTLGIPAWCSYVFFVIATLVFGLFMGLVLVVISECFYVPLPRHLSERSEQNRRSEEAHRAEQLQDAEEEKDDSNEEENKDSLVDDEEEKEDLGDEDEAEEEEEEDNLAAGVDEERSEANDQGPPGEDGVTREEVEPEEAEEGISEQPCPADTEVVEDSLRQRKSQHADKGL.

Positions 1–23 (MAGGRCGPQLTALLAAWIAAVAA) are cleaved as a signal peptide. The Thioredoxin domain occupies 30 to 137 (AALPPEQSRV…FEDLQNYILE (108 aa)). Catalysis depends on nucleophile residues Cys-64 and Cys-67. Cys-64 and Cys-67 are disulfide-bonded. The chain crosses the membrane as a helical span at residues 190 to 210 (VFFVIATLVFGLFMGLVLVVI). Positions 225-240 (RSEQNRRSEEAHRAEQ) are enriched in basic and acidic residues. The tract at residues 225–349 (RSEQNRRSEE…RKSQHADKGL (125 aa)) is disordered. Acidic residues-rich tracts occupy residues 242 to 284 (QDAE…EEDN) and 312 to 321 (VEPEEAEEGI). Residues Ser-251 and Ser-259 each carry the phosphoserine modification. Positions 335 to 349 (DSLRQRKSQHADKGL) are enriched in basic and acidic residues.

The protein resides in the nucleus inner membrane. It localises to the endoplasmic reticulum membrane. This is Thioredoxin-related transmembrane protein 4 (TMX4) from Homo sapiens (Human).